Here is a 202-residue protein sequence, read N- to C-terminus: Ribonuclease HII (202 aa).

Residues leucine 12–glutamate 201 enclose the RNase H type-2 domain. A divalent metal cation is bound by residues aspartate 18, glutamate 19, and aspartate 110.

It belongs to the RNase HII family. Requires Mn(2+) as cofactor. It depends on Mg(2+) as a cofactor.

It localises to the cytoplasm. It catalyses the reaction Endonucleolytic cleavage to 5'-phosphomonoester.. Endonuclease that specifically degrades the RNA of RNA-DNA hybrids. This is Ribonuclease HII from Coxiella burnetii (strain CbuK_Q154) (Coxiella burnetii (strain Q154)).